Reading from the N-terminus, the 428-residue chain is C4-dicarboxylate transport protein (428 aa).

8 helical membrane passes run 8–28 (SLYF…HFYP), 44–64 (LIKM…IAGM), 76–96 (VALL…LIIV), 142–162 (IGAF…LFGF), 184–204 (VIFG…FGAM), 222–242 (LIIC…GSIA), 326–346 (IVHQ…AAGV), and 352–372 (IVLA…LALI).

Belongs to the dicarboxylate/amino acid:cation symporter (DAACS) (TC 2.A.23) family.

The protein localises to the cell inner membrane. Responsible for the transport of dicarboxylates such as succinate, fumarate, and malate from the periplasm across the membrane. The polypeptide is C4-dicarboxylate transport protein (Shigella dysenteriae serotype 1 (strain Sd197)).